The sequence spans 228 residues: Putative N-acetylmannosamine-6-phosphate 2-epimerase (228 aa).

The protein belongs to the NanE family.

It catalyses the reaction an N-acyl-D-glucosamine 6-phosphate = an N-acyl-D-mannosamine 6-phosphate. Its pathway is amino-sugar metabolism; N-acetylneuraminate degradation; D-fructose 6-phosphate from N-acetylneuraminate: step 3/5. Its function is as follows. Converts N-acetylmannosamine-6-phosphate (ManNAc-6-P) to N-acetylglucosamine-6-phosphate (GlcNAc-6-P). This chain is Putative N-acetylmannosamine-6-phosphate 2-epimerase, found in Pasteurella multocida (strain Pm70).